Reading from the N-terminus, the 281-residue chain is Bifunctional protein FolD (281 aa).

Residues 165–167 (GRG), T192, and V233 each bind NADP(+).

This sequence belongs to the tetrahydrofolate dehydrogenase/cyclohydrolase family. As to quaternary structure, homodimer.

The catalysed reaction is (6R)-5,10-methylene-5,6,7,8-tetrahydrofolate + NADP(+) = (6R)-5,10-methenyltetrahydrofolate + NADPH. It catalyses the reaction (6R)-5,10-methenyltetrahydrofolate + H2O = (6R)-10-formyltetrahydrofolate + H(+). It functions in the pathway one-carbon metabolism; tetrahydrofolate interconversion. Functionally, catalyzes the oxidation of 5,10-methylenetetrahydrofolate to 5,10-methenyltetrahydrofolate and then the hydrolysis of 5,10-methenyltetrahydrofolate to 10-formyltetrahydrofolate. The sequence is that of Bifunctional protein FolD from Mycobacteroides abscessus (strain ATCC 19977 / DSM 44196 / CCUG 20993 / CIP 104536 / JCM 13569 / NCTC 13031 / TMC 1543 / L948) (Mycobacterium abscessus).